A 191-amino-acid chain; its full sequence is Cytochrome c oxidase assembly protein CtaG (191 aa).

Residues 1–9 (MSLSPHQKT) lie on the Cytoplasmic side of the membrane. The chain crosses the membrane as a helical; Signal-anchor for type II membrane protein span at residues 10-30 (AGGLVLVVAVMGAASFAAVPF). Topologically, residues 31 to 191 (YNWFCRVTGF…LAAESATDVN (161 aa)) are periplasmic.

The protein belongs to the COX11/CtaG family.

The protein resides in the cell inner membrane. In terms of biological role, exerts its effect at some terminal stage of cytochrome c oxidase synthesis, probably by being involved in the insertion of the copper B into subunit I. This Cereibacter sphaeroides (strain ATCC 17023 / DSM 158 / JCM 6121 / CCUG 31486 / LMG 2827 / NBRC 12203 / NCIMB 8253 / ATH 2.4.1.) (Rhodobacter sphaeroides) protein is Cytochrome c oxidase assembly protein CtaG.